Consider the following 255-residue polypeptide: Thiazole synthase (255 aa).

Lys-97 serves as the catalytic Schiff-base intermediate with DXP. 1-deoxy-D-xylulose 5-phosphate contacts are provided by residues Gly-158, 184 to 185, and 206 to 207; these read AG and NT.

Belongs to the ThiG family. As to quaternary structure, homotetramer. Forms heterodimers with either ThiH or ThiS.

It is found in the cytoplasm. The enzyme catalyses [ThiS sulfur-carrier protein]-C-terminal-Gly-aminoethanethioate + 2-iminoacetate + 1-deoxy-D-xylulose 5-phosphate = [ThiS sulfur-carrier protein]-C-terminal Gly-Gly + 2-[(2R,5Z)-2-carboxy-4-methylthiazol-5(2H)-ylidene]ethyl phosphate + 2 H2O + H(+). It functions in the pathway cofactor biosynthesis; thiamine diphosphate biosynthesis. In terms of biological role, catalyzes the rearrangement of 1-deoxy-D-xylulose 5-phosphate (DXP) to produce the thiazole phosphate moiety of thiamine. Sulfur is provided by the thiocarboxylate moiety of the carrier protein ThiS. In vitro, sulfur can be provided by H(2)S. In Moorella thermoacetica (strain ATCC 39073 / JCM 9320), this protein is Thiazole synthase.